Consider the following 73-residue polypeptide: UPF0154 protein PEPE_0872 (73 aa).

Residues 5–25 (IWIMIVIIALLVGAVGGFFFA) traverse the membrane as a helical segment.

The protein belongs to the UPF0154 family.

It localises to the cell membrane. In Pediococcus pentosaceus (strain ATCC 25745 / CCUG 21536 / LMG 10740 / 183-1w), this protein is UPF0154 protein PEPE_0872.